The sequence spans 491 residues: Probable cytosol aminopeptidase (491 aa).

Lys264 and Asp269 together coordinate Mn(2+). The active site involves Lys276. 3 residues coordinate Mn(2+): Asp287, Asp346, and Glu348. The active site involves Arg350.

The protein belongs to the peptidase M17 family. The cofactor is Mn(2+).

Its subcellular location is the cytoplasm. It carries out the reaction Release of an N-terminal amino acid, Xaa-|-Yaa-, in which Xaa is preferably Leu, but may be other amino acids including Pro although not Arg or Lys, and Yaa may be Pro. Amino acid amides and methyl esters are also readily hydrolyzed, but rates on arylamides are exceedingly low.. The catalysed reaction is Release of an N-terminal amino acid, preferentially leucine, but not glutamic or aspartic acids.. Presumably involved in the processing and regular turnover of intracellular proteins. Catalyzes the removal of unsubstituted N-terminal amino acids from various peptides. The polypeptide is Probable cytosol aminopeptidase (Xylella fastidiosa (strain M12)).